Reading from the N-terminus, the 235-residue chain is MSFDQILLPGILRRRYQRFFADVALETGESIVAHCPNTGSMRGLAEPGLGVYVSRANNPRRKLAYTLELVDAHTSLVGVHTGRANILTKEAIAAGRISQLLGYGEIRQEVRYSKNSRIDLLLEDPSTQQCCYVEVKSVTLRQGDGAACFPDAVTTRGAKHLDDLAATVCSPRQRAVMFYLVQREDCRYFTPADDIDPRYGAKLRSAIEQGVEILAYACQVSSQGIQVTQSLPIHL.

This sequence belongs to the SfsA family.

The chain is Sugar fermentation stimulation protein homolog from Nitrosococcus oceani (strain ATCC 19707 / BCRC 17464 / JCM 30415 / NCIMB 11848 / C-107).